The primary structure comprises 635 residues: UvrABC system protein C (635 aa).

Residues 1-14 (MAQNHMSETMNDIS) are compositionally biased toward polar residues. Residues 1–27 (MAQNHMSETMNDISAESPDQPEPPRTG) are disordered. In terms of domain architecture, GIY-YIG spans 40–117 (SSPGVYRMLD…IKQLKPKYNV (78 aa)). The 36-residue stretch at 227–262 (TKIQEELGAEMQAASEAMEYERAAALRDRIKALTQV) folds into the UVR domain.

The protein belongs to the UvrC family. In terms of assembly, interacts with UvrB in an incision complex.

It is found in the cytoplasm. In terms of biological role, the UvrABC repair system catalyzes the recognition and processing of DNA lesions. UvrC both incises the 5' and 3' sides of the lesion. The N-terminal half is responsible for the 3' incision and the C-terminal half is responsible for the 5' incision. The polypeptide is UvrABC system protein C (Ruegeria sp. (strain TM1040) (Silicibacter sp.)).